We begin with the raw amino-acid sequence, 172 residues long: Ribosome maturation factor RimM (172 aa).

The PRC barrel domain occupies 95–168 (QEGEFYYHQI…CVDVELMEGL (74 aa)).

It belongs to the RimM family. Binds ribosomal protein uS19.

Its subcellular location is the cytoplasm. Functionally, an accessory protein needed during the final step in the assembly of 30S ribosomal subunit, possibly for assembly of the head region. Essential for efficient processing of 16S rRNA. May be needed both before and after RbfA during the maturation of 16S rRNA. It has affinity for free ribosomal 30S subunits but not for 70S ribosomes. The protein is Ribosome maturation factor RimM of Streptococcus pyogenes serotype M49 (strain NZ131).